Consider the following 166-residue polypeptide: Vasopressin-neurophysin 2-copeptin (166 aa).

Residues 1–19 form the signal peptide; the sequence is MPDATLPACFLGLLALTSA. Cys-20 and Cys-25 form a disulfide bridge. A Glycine amide modification is found at Gly-28. 7 cysteine pairs are disulfide-bonded: Cys-41–Cys-85, Cys-44–Cys-58, Cys-52–Cys-75, Cys-59–Cys-65, Cys-92–Cys-104, Cys-98–Cys-116, and Cys-105–Cys-110. The N-linked (GlcNAc...) asparagine glycan is linked to Asn-133.

Belongs to the vasopressin/oxytocin family. As to quaternary structure, interacts with vasopressin receptors V1bR/AVPR1B (Ki=85 pM), V1aR/AVPR1A (Ki=0.6 nM) and V2R/AVPR2 (Ki=4.9 nM). Interacts with oxytocin receptor (OXTR) (Ki=110 nM). Post-translationally, a shorter neurophysin molecule (32-123) is called neurophysin-I and is derived from the complete protein (called neurophysin III) by proteolytic degradation (in vivo or after extraction).

It is found in the secreted. Its function is as follows. Neurophysin 2 specifically binds vasopressin. Functionally, vasopressin has a direct antidiuretic action on the kidney, it also causes vasoconstriction of the peripheral vessels. Acts by binding to vasopressin receptors (V1bR/AVPR1B, V1aR/AVPR1A, and V2R/AVPR2). The chain is Vasopressin-neurophysin 2-copeptin (AVP) from Sus scrofa (Pig).